Here is a 262-residue protein sequence, read N- to C-terminus: Glutamate racemase (262 aa).

Substrate is bound by residues 9–10 (DS) and 41–42 (YG). Residue cysteine 73 is the Proton donor/acceptor of the active site. 74 to 75 (NT) is a binding site for substrate. The active-site Proton donor/acceptor is the cysteine 180. 181-182 (TH) serves as a coordination point for substrate.

Belongs to the aspartate/glutamate racemases family.

It carries out the reaction L-glutamate = D-glutamate. It functions in the pathway cell wall biogenesis; peptidoglycan biosynthesis. In terms of biological role, provides the (R)-glutamate required for cell wall biosynthesis. The chain is Glutamate racemase from Aliivibrio fischeri (strain ATCC 700601 / ES114) (Vibrio fischeri).